The chain runs to 318 residues: Retinol dehydrogenase 5 (318 aa).

A helical transmembrane segment spans residues 1–21 (MWLPLLLGALLWAVLWLLRDR). The Lumenal segment spans residues 22-288 (QSLPASNAFV…TRYSPGWDAK (267 aa)). 32-56 (FITGCDSGFGRLLALQLDQRGFRVL) contacts NADP(+). N-linked (GlcNAc...) asparagine glycosylation is present at N160. Residue S163 coordinates substrate. The active-site Proton acceptor is Y175. Residues 289–309 (LLWLPASYLPASLVDAVLTWV) form a helical membrane-spanning segment. The Cytoplasmic portion of the chain corresponds to 310–318 (LPKPAQAVY).

This sequence belongs to the short-chain dehydrogenases/reductases (SDR) family. In terms of assembly, homodimer. Widely expressed. In the eye, abundant in the retinal pigment epithelium.

It localises to the endoplasmic reticulum membrane. It carries out the reaction 11-cis-retinol + NAD(+) = 11-cis-retinal + NADH + H(+). The catalysed reaction is 9-cis-retinol + NAD(+) = 9-cis-retinal + NADH + H(+). The enzyme catalyses 13-cis-retinol + NAD(+) = 13-cis-retinal + NADH + H(+). It catalyses the reaction androsterone + NAD(+) = 5alpha-androstan-3,17-dione + NADH + H(+). It carries out the reaction 5alpha-androstane-3alpha,17beta-diol + NAD(+) = 17beta-hydroxy-5alpha-androstan-3-one + NADH + H(+). Its pathway is cofactor metabolism; retinol metabolism. Inhibited by 9-cis-, 13-cis- and all-trans-retinoic acids, with the most potent inhibitor being 13-cis-retinoic acid. Weakly inhibited by oleic acid. Its function is as follows. Catalyzes the oxidation of cis-isomers of retinol, including 11-cis-, 9-cis-, and 13-cis-retinol in an NAD-dependent manner. Has no activity towards all-trans retinal. Plays a significant role in 11-cis retinol oxidation in the retinal pigment epithelium cells (RPE). Also recognizes steroids (androsterone, androstanediol) as its substrates. The chain is Retinol dehydrogenase 5 from Homo sapiens (Human).